A 404-amino-acid chain; its full sequence is Peroxisomal biogenesis factor 9 (404 aa).

3 consecutive transmembrane segments (helical) span residues 73 to 93 (FLFL…SLVF), 94 to 114 (LLGV…LLMG), and 149 to 169 (FGLD…FQVV). The tract at residues 180-214 (DGQRSQQSQNSGMNVASSSRGRHQLVPDRPGSQLS) is disordered. Polar residues predominate over residues 181–198 (GQRSQQSQNSGMNVASSS). The chain crosses the membrane as a helical span at residues 349 to 369 (FFVGLVSWIVDETAACVVFCL).

The protein resides in the peroxisome membrane. Essential for the import of peroxisomal matrix proteins. This is Peroxisomal biogenesis factor 9 (PEX9) from Yarrowia lipolytica (strain CLIB 122 / E 150) (Yeast).